A 404-amino-acid chain; its full sequence is Sulfate adenylyltransferase (404 aa).

Belongs to the sulfate adenylyltransferase family.

It carries out the reaction sulfate + ATP + H(+) = adenosine 5'-phosphosulfate + diphosphate. Its pathway is sulfur metabolism; hydrogen sulfide biosynthesis; sulfite from sulfate: step 1/3. The polypeptide is Sulfate adenylyltransferase (Chlorobaculum tepidum (strain ATCC 49652 / DSM 12025 / NBRC 103806 / TLS) (Chlorobium tepidum)).